The chain runs to 374 residues: Mitochondrial inner membrane protein oxa1-1 (374 aa).

A helical membrane pass occupies residues 77–97 (TINVYAGAPWWVSIILTTLGV). The Mitochondrial intermembrane segment spans residues 98–159 (RLALTPVMIA…GIYLKHNVNP (62 aa)). The chain crosses the membrane as a helical span at residues 160–180 (FAIFILPLTQSAVFFSFFYAI). The Mitochondrial matrix segment spans residues 181-242 (RKMSRLSVDG…TIGNSTNWRT (62 aa)). A helical membrane pass occupies residues 243-263 (FFFLCCLLSPLLTAKLPAAIF). Over 264–374 (MYWIPSSLFN…SKKNSKKQSN (111 aa)) the chain is Mitochondrial intermembrane.

It belongs to the OXA1/ALB3/YidC family.

Its subcellular location is the mitochondrion inner membrane. Required for the insertion of integral membrane proteins into the mitochondrial inner membrane. Essential for the activity and assembly of cytochrome c oxidase. Not essential for viability, while oxa102 is essential. When both genes are deleted the cell is non-viable, suggesting that oxa101 act as a back-up for oxa102. In Schizosaccharomyces pombe (strain 972 / ATCC 24843) (Fission yeast), this protein is Mitochondrial inner membrane protein oxa1-1 (oxa101).